The primary structure comprises 167 residues: uncharacterized protein (167 aa).

Residues 1 to 25 form the signal peptide; the sequence is MPFSVTKFSLIFVALLLAEALVAQS.

This is an uncharacterized protein from Caenorhabditis elegans.